Consider the following 1365-residue polypeptide: Killer toxin-resistance protein 5 (1365 aa).

The N-terminal stretch at 1-17 (MRLLALVLLLLCAPLRA) is a signal peptide. Asparagine 115, asparagine 228, asparagine 293, asparagine 457, asparagine 519, asparagine 523, asparagine 644, asparagine 870, asparagine 1091, asparagine 1150, and asparagine 1195 each carry an N-linked (GlcNAc...) asparagine glycan. Positions 1334 to 1365 (FASSPGDEDVPGESVSSKYQDSDNAAPLHDEL) are disordered. Over residues 1347–1356 (SVSSKYQDSD) the composition is skewed to polar residues. The Prevents secretion from ER signature appears at 1362-1365 (HDEL).

It to D.melanogaster UGGG.

It localises to the endoplasmic reticulum lumen. Required for (1-&gt;6)-beta-D-glucan synthesis and normal cell growth. The protein is Killer toxin-resistance protein 5 (KRE5) of Saccharomyces cerevisiae (strain ATCC 204508 / S288c) (Baker's yeast).